We begin with the raw amino-acid sequence, 2185 residues long: Genome polyprotein (2185 aa).

The N-myristoyl glycine; by host moiety is linked to residue glycine 2. At 2–1495 the chain is on the cytoplasmic side; that stretch reads GAQVSTQKTG…HVSRAFICLQ (1494 aa). Positions 566 to 582 are amphipathic alpha-helix; that stretch reads FYQGPPGEAVERAIARV. Catalysis depends on for protease 2A activity residues histidine 872 and aspartate 890. Positions 907 and 909 each coordinate Zn(2+). The active-site For protease 2A activity is the cysteine 961. Residues cysteine 967 and histidine 969 each coordinate Zn(2+). The segment at 1101–1173 is membrane-binding; sequence NNNWLKKFTE…EQSAPSQSDQ (73 aa). The interval 1101 to 1239 is oligomerization; it reads NNNWLKKFTE…SPGAGKSVAT (139 aa). The RNA-binding stretch occupies residues 1122–1126; the sequence is AVKIQ. In terms of domain architecture, SF3 helicase spans 1205-1361; it reads EKKMSNYIQF…SMYSQNGKIN (157 aa). The Zn(2+) site is built by cysteine 1369, cysteine 1381, and cysteine 1386. The C4-type; degenerate zinc-finger motif lies at 1369-1386; that stretch reads CDEECCPVNFKRCCPLVC. The tract at residues 1413-1420 is RNA-binding; it reads EYNHRHSV. The tract at residues 1424–1429 is oligomerization; the sequence is LEALFQ. The stretch at 1496–1511 is an intramembrane region; that stretch reads ALTTFVSVAGIIYIIY. The Cytoplasmic segment spans residues 1512-2185; sequence KLFAGFQGAY…TLRRKWLDSF (674 aa). Tyrosine 1521 is subject to O-(5'-phospho-RNA)-tyrosine. Residues 1541–1719 enclose the Peptidase C3 domain; it reads GPAFEFAVAM…FSAALLKHYF (179 aa). Catalysis depends on for protease 3C activity residues histidine 1580, glutamate 1611, and cysteine 1687. The RdRp catalytic domain maps to 1950 to 2066; that stretch reads GHLIAFDYSG…SYPWPIDASL (117 aa). Aspartate 1956 and aspartate 2052 together coordinate Mg(2+).

Belongs to the picornaviruses polyprotein family. In terms of assembly, interacts with capsid protein VP1 and capsid protein VP3 to form heterotrimeric protomers. As to quaternary structure, interacts with capsid protein VP0, and capsid protein VP3 to form heterotrimeric protomers. Five protomers subsequently associate to form pentamers which serve as building blocks for the capsid. Interacts with capsid protein VP2, capsid protein VP3 and capsid protein VP4 following cleavage of capsid protein VP0. Interacts with capsid protein VP1 and capsid protein VP3 in the mature capsid. In terms of assembly, interacts with capsid protein VP0 and capsid protein VP1 to form heterotrimeric protomers. Five protomers subsequently associate to form pentamers which serve as building blocks for the capsid. Interacts with capsid protein VP4 in the mature capsid. Interacts with protein 2C; this interaction may be important for virion morphogenesis. As to quaternary structure, interacts with capsid protein VP1 and capsid protein VP3. Homodimer. In terms of assembly, homohexamer; forms a hexameric ring structure with 6-fold symmetry characteristic of AAA+ ATPases. Interacts (via N-terminus) with host RTN3 (via reticulon domain); this interaction is important for viral replication. Interacts with capsid protein VP3; this interaction may be important for virion morphogenesis. As to quaternary structure, interacts with protein 3CD. Homodimer. Interacts with host GBF1. Interacts (via GOLD domain) with host ACBD3 (via GOLD domain); this interaction allows the formation of a viral protein 3A/ACBD3 heterotetramer with a 2:2 stoichiometry, which will stimulate the recruitment of host PI4KB in order to synthesize PI4P at the viral RNA replication sites. In terms of assembly, interacts with RNA-directed RNA polymerase. As to quaternary structure, interacts with protein 3AB and with RNA-directed RNA polymerase. Interacts with Viral protein genome-linked and with protein 3CD. Mg(2+) is required as a cofactor. Post-translationally, specific enzymatic cleavages in vivo by the viral proteases yield processing intermediates and the mature proteins. Myristoylation is required for the formation of pentamers during virus assembly. Further assembly of 12 pentamers and a molecule of genomic RNA generates the provirion. In terms of processing, during virion maturation, immature virions are rendered infectious following cleavage of VP0 into VP4 and VP2. This maturation seems to be an autocatalytic event triggered by the presence of RNA in the capsid and it is followed by a conformational change infectious virion. Post-translationally, myristoylation is required during RNA encapsidation and formation of the mature virus particle. VPg is uridylylated by the polymerase into VPg-pUpU. This acts as a nucleotide-peptide primer for the genomic RNA replication.

It localises to the virion. The protein resides in the host cytoplasm. The protein localises to the host cytoplasmic vesicle membrane. It is found in the host nucleus. The catalysed reaction is a ribonucleoside 5'-triphosphate + H2O = a ribonucleoside 5'-diphosphate + phosphate + H(+). The enzyme catalyses Selective cleavage of Tyr-|-Gly bond in the picornavirus polyprotein.. It carries out the reaction RNA(n) + a ribonucleoside 5'-triphosphate = RNA(n+1) + diphosphate. It catalyses the reaction Selective cleavage of Gln-|-Gly bond in the poliovirus polyprotein. In other picornavirus reactions Glu may be substituted for Gln, and Ser or Thr for Gly.. Replication or transcription is subject to high level of random mutations by the nucleotide analog ribavirin. Forms an icosahedral capsid of pseudo T=3 symmetry with capsid proteins VP2 and VP3. The capsid is 300 Angstroms in diameter, composed of 60 copies of each capsid protein and enclosing the viral positive strand RNA genome. Capsid protein VP1 mainly forms the vertices of the capsid. Capsid protein VP1 interacts with host cell receptor to provide virion attachment to target host cells. This attachment induces virion internalization. Tyrosine kinases are probably involved in the entry process. After binding to its receptor, the capsid undergoes conformational changes. Capsid protein VP1 N-terminus (that contains an amphipathic alpha-helix) and capsid protein VP4 are externalized. Together, they shape a pore in the host membrane through which viral genome is translocated to host cell cytoplasm. Its function is as follows. Forms an icosahedral capsid of pseudo T=3 symmetry with capsid proteins VP2 and VP3. The capsid is 300 Angstroms in diameter, composed of 60 copies of each capsid protein and enclosing the viral positive strand RNA genome. In terms of biological role, lies on the inner surface of the capsid shell. After binding to the host receptor, the capsid undergoes conformational changes. Capsid protein VP4 is released, Capsid protein VP1 N-terminus is externalized, and together, they shape a pore in the host membrane through which the viral genome is translocated into the host cell cytoplasm. Functionally, component of immature procapsids, which is cleaved into capsid proteins VP4 and VP2 after maturation. Allows the capsid to remain inactive before the maturation step. Cysteine protease that cleaves viral polyprotein and specific host proteins. It is responsible for the autocatalytic cleavage between the P1 and P2 regions, which is the first cleavage occurring in the polyprotein. Also cleaves the host translation initiation factor EIF4G1, in order to shut down the capped cellular mRNA translation. Inhibits the host nucleus-cytoplasm protein and RNA trafficking by cleaving host members of the nuclear pores. Counteracts stress granule formation probably by antagonizing its assembly or promoting its dissassembly. Cleaves and inhibits host IFIH1/MDA5, thereby inhibiting the type-I IFN production and the establishment of the antiviral state. Cleaves and inhibits host MAVS, thereby inhibiting the type-I IFN production and the establishment of the antiviral state. Its function is as follows. Plays an essential role in the virus replication cycle by acting as a viroporin. Creates a pore in the host endoplasmic reticulum and as a consequence releases Ca2+ in the cytoplasm of infected cell. In turn, high levels of cytoplasmic calcium may trigger membrane trafficking and transport of viral ER-associated proteins to viroplasms, sites of viral genome replication. In terms of biological role, induces and associates with structural rearrangements of intracellular membranes. Displays RNA-binding, nucleotide binding and NTPase activities. May play a role in virion morphogenesis and viral RNA encapsidation by interacting with the capsid protein VP3. Functionally, localizes the viral replication complex to the surface of membranous vesicles. Together with protein 3CD binds the Cis-Active RNA Element (CRE) which is involved in RNA synthesis initiation. Acts as a cofactor to stimulate the activity of 3D polymerase, maybe through a nucleid acid chaperone activity. Localizes the viral replication complex to the surface of membranous vesicles. It inhibits host cell endoplasmic reticulum-to-Golgi apparatus transport and causes the disassembly of the Golgi complex, possibly through GBF1 interaction. This would result in depletion of MHC, trail receptors and IFN receptors at the host cell surface. Plays an essential role in viral RNA replication by recruiting ACBD3 and PI4KB at the viral replication sites, thereby allowing the formation of the rearranged membranous structures where viral replication takes place. Its function is as follows. Acts as a primer for viral RNA replication and remains covalently bound to viral genomic RNA. VPg is uridylylated prior to priming replication into VPg-pUpU. The oriI viral genomic sequence may act as a template for this. The VPg-pUpU is then used as primer on the genomic RNA poly(A) by the RNA-dependent RNA polymerase to replicate the viral genome. During genome replication, the VPg-RNA linkage is removed by the host TDP2, thereby accelerating replication. During the late stage of the replication cycle, host TDP2 is excluded from sites of viral RNA synthesis and encapsidation, allowing for the generation of progeny virions. In terms of biological role, involved in the viral replication complex and viral polypeptide maturation. It exhibits protease activity with a specificity and catalytic efficiency that is different from protease 3C. Protein 3CD lacks polymerase activity. Protein 3CD binds to the 5'UTR of the viral genome. Functionally, replicates the viral genomic RNA on the surface of intracellular membranes. May form linear arrays of subunits that propagate along a strong head-to-tail interaction called interface-I. Covalently attaches UMP to a tyrosine of VPg, which is used to prime RNA synthesis. The positive stranded RNA genome is first replicated at virus induced membranous vesicles, creating a dsRNA genomic replication form. This dsRNA is then used as template to synthesize positive stranded RNA genomes. ss(+)RNA genomes are either translated, replicated or encapsidated. Major viral protease that mediates proteolytic processing of the polyprotein. Cleaves host EIF5B, contributing to host translation shutoff. Also cleaves host PABPC1, contributing to host translation shutoff. Cleaves host NLRP1, triggers host N-glycine-mediated degradation of the autoinhibitory NLRP1 N-terminal fragment. The chain is Genome polyprotein from Homo sapiens (Human).